The chain runs to 335 residues: Mitochondrial amidoxime reducing component 2 (335 aa).

The transit peptide at 1-35 directs the protein to the mitochondrion; it reads MGASSSSALARLGLPARPWPRWLGVAALGLAAVAL. Residues Lys-59, Lys-138, and Lys-144 each participate in a glycyl lysine isopeptide (Lys-Gly) (interchain with G-Cter in ubiquitin) cross-link. Lys-156 carries the N6-acetyllysine; alternate modification. Lys-156 participates in a covalent cross-link: Glycyl lysine isopeptide (Lys-Gly) (interchain with G-Cter in ubiquitin); alternate. Residues Lys-166, Lys-173, Lys-187, Lys-287, and Lys-294 each participate in a glycyl lysine isopeptide (Lys-Gly) (interchain with G-Cter in ubiquitin) cross-link. One can recognise an MOSC domain in the interval 188 to 334; that stretch reads GRTSRKLLPT…LRVGDPVYRM (147 aa).

As to quaternary structure, component of a complex composed of cytochrome b5, NADH-cytochrome b5 reductase (CYB5R3) and MTARC2. It depends on Mo-molybdopterin as a cofactor. In terms of processing, ubiquitinated by PRKN during mitophagy, leading to its degradation and enhancement of mitophagy. Deubiquitinated by USP30.

It localises to the mitochondrion outer membrane. The protein resides in the peroxisome. The enzyme catalyses N(omega)-hydroxy-L-arginine + 2 Fe(II)-[cytochrome b5] + 2 H(+) = L-arginine + 2 Fe(III)-[cytochrome b5] + H2O. Functionally, catalyzes the reduction of N-oxygenated molecules, acting as a counterpart of cytochrome P450 and flavin-containing monooxygenases in metabolic cycles. As a component of prodrug-converting system, reduces a multitude of N-hydroxylated prodrugs particularly amidoximes, leading to increased drug bioavailability. May be involved in mitochondrial N(omega)-hydroxy-L-arginine (NOHA) reduction, regulating endogenous nitric oxide levels and biosynthesis. Postulated to cleave the N-OH bond of N-hydroxylated substrates in concert with electron transfer from NADH to cytochrome b5 reductase then to cytochrome b5, the ultimate electron donor that primes the active site for substrate reduction. This chain is Mitochondrial amidoxime reducing component 2, found in Homo sapiens (Human).